The primary structure comprises 291 residues: 4-diphosphocytidyl-2-C-methyl-D-erythritol kinase (291 aa).

K12 is an active-site residue. Position 95 to 105 (P95 to S105) interacts with ATP. D137 is an active-site residue.

The protein belongs to the GHMP kinase family. IspE subfamily.

It carries out the reaction 4-CDP-2-C-methyl-D-erythritol + ATP = 4-CDP-2-C-methyl-D-erythritol 2-phosphate + ADP + H(+). It functions in the pathway isoprenoid biosynthesis; isopentenyl diphosphate biosynthesis via DXP pathway; isopentenyl diphosphate from 1-deoxy-D-xylulose 5-phosphate: step 3/6. Functionally, catalyzes the phosphorylation of the position 2 hydroxy group of 4-diphosphocytidyl-2C-methyl-D-erythritol. The polypeptide is 4-diphosphocytidyl-2-C-methyl-D-erythritol kinase (Alkalilimnicola ehrlichii (strain ATCC BAA-1101 / DSM 17681 / MLHE-1)).